A 234-amino-acid polypeptide reads, in one-letter code: Small ribosomal subunit protein uS3 (234 aa).

In terms of domain architecture, KH type-2 spans 39-107 (IRKFLKKELY…EVSINIKEVK (69 aa)).

The protein belongs to the universal ribosomal protein uS3 family. Part of the 30S ribosomal subunit. Forms a tight complex with proteins S10 and S14.

Its function is as follows. Binds the lower part of the 30S subunit head. Binds mRNA in the 70S ribosome, positioning it for translation. The chain is Small ribosomal subunit protein uS3 from Helicobacter acinonychis (strain Sheeba).